The following is a 370-amino-acid chain: Cytochrome b (370 aa).

Helical transmembrane passes span 25–45, 69–90, 105–125, and 170–190; these read FGSMLIACSTLQVLTGFFLAV, WLMQNLHAIGASMFFICIYIHI, WLSGTTLLIMLMATAFFGYVL, and FFALHFILPFGIISMSSLHVM. Residues histidine 75 and histidine 89 each contribute to the heme b site. Residues histidine 174 and histidine 188 each coordinate heme b. Histidine 193 contacts a ubiquinone. Transmembrane regions (helical) follow at residues 218–238, 280–300, 312–332, and 339–358; these read YKDLLMLAAMTTLLLLIVSFS, LGGALALTMSIVILLTVPFTH, FMQMTFWLFAATFMVITWTAT, and FTLIGQAASMIYFLFFISNP.

Belongs to the cytochrome b family. As to quaternary structure, the cytochrome bc1 complex contains 3 respiratory subunits (MT-CYB, CYC1 and UQCRFS1), 2 core proteins (UQCRC1 and UQCRC2) and probably 6 low-molecular weight proteins. Heme b serves as cofactor.

The protein resides in the mitochondrion inner membrane. In terms of biological role, component of the ubiquinol-cytochrome c reductase complex (complex III or cytochrome b-c1 complex) that is part of the mitochondrial respiratory chain. The b-c1 complex mediates electron transfer from ubiquinol to cytochrome c. Contributes to the generation of a proton gradient across the mitochondrial membrane that is then used for ATP synthesis. The protein is Cytochrome b (MT-CYB) of Eunectes notaeus (Yellow anaconda).